Consider the following 558-residue polypeptide: Acylase ACY 1 proenzyme (558 aa).

Thr368 (nucleophile) is an active-site residue.

Belongs to the gamma-glutamyltransferase family. In terms of assembly, dimer of two non-identical chains processed from the same precursor.

It catalyses the reaction (7R)-7-(4-carboxybutanamido)cephalosporanate + H2O = (7R)-7-aminocephalosporanate + glutarate. It carries out the reaction an N-terminal (5-L-glutamyl)-[peptide] + an alpha-amino acid = 5-L-glutamyl amino acid + an N-terminal L-alpha-aminoacyl-[peptide]. The enzyme catalyses glutathione + H2O = L-cysteinylglycine + L-glutamate. The catalysed reaction is an S-substituted glutathione + H2O = an S-substituted L-cysteinylglycine + L-glutamate. Besides the cephalosporin acylase I activity which converts GL-7ACA into 7-ACA; this enzyme displays some gamma glutamyltranspeptidase activity. The chain is Acylase ACY 1 proenzyme (acyI) from Pseudomonas sp. (strain SE83).